We begin with the raw amino-acid sequence, 509 residues long: Scavenger receptor class B member 1 (509 aa).

The Cytoplasmic portion of the chain corresponds to 1-11 (MGVSSRARWVA). The helical transmembrane segment at 12 to 32 (LGLGVLGLLCAALGVIMILMV) threads the bilayer. Over 33–440 (PSLIKQQVLK…YTQLVLMPQV (408 aa)) the chain is Extracellular. Residues Asn-102, Asn-108, Asn-116, Asn-173, Asn-212, Asn-227, Asn-255, Asn-310, Asn-330, and Asn-383 are each glycosylated (N-linked (GlcNAc...) asparagine). Residues Cys-251 and Cys-384 are joined by a disulfide bond. Residues 441-461 (LHYAQYVLLGLGGLLLLVPII) form a helical membrane-spanning segment. Over 462–509 (YQLRSQEKCFLFWSGSKKGSQDKEAMQAYSESLMSPAAKGTVLQEAKL) the chain is Cytoplasmic.

It belongs to the CD36 family. As to quaternary structure, the C-terminal region binds to PDZK1. Post-translationally, N-glycosylated. In terms of processing, the six cysteines of the extracellular domain are all involved in intramolecular disulfide bonds.

Its subcellular location is the cell membrane. The protein localises to the membrane. It localises to the caveola. In terms of biological role, receptor for different ligands such as phospholipids, cholesterol ester, lipoproteins, phosphatidylserine and apoptotic cells. Receptor for HDL, mediating selective uptake of cholesteryl ether and HDL-dependent cholesterol efflux. Also facilitates the flux of free and esterified cholesterol between the cell surface and apoB-containing lipoproteins and modified lipoproteins, although less efficiently than HDL. May be involved in the phagocytosis of apoptotic cells, via its phosphatidylserine binding activity. The sequence is that of Scavenger receptor class B member 1 (Scarb1) from Rattus norvegicus (Rat).